Consider the following 463-residue polypeptide: Probable Xaa-Pro aminopeptidase pepP (463 aa).

Positions 259, 270, 393, and 433 each coordinate Mn(2+).

Belongs to the peptidase M24B family. The cofactor is Mn(2+).

The enzyme catalyses Release of any N-terminal amino acid, including proline, that is linked to proline, even from a dipeptide or tripeptide.. Its function is as follows. Catalyzes the removal of a penultimate prolyl residue from the N-termini of peptides. This is Probable Xaa-Pro aminopeptidase pepP (pepP) from Pyrenophora tritici-repentis (strain Pt-1C-BFP) (Wheat tan spot fungus).